A 491-amino-acid polypeptide reads, in one-letter code: Cobyric acid synthase (491 aa).

The 177-residue stretch at 253–429 (ARRVAVIRLP…WHGALEGDEL (177 aa)) folds into the GATase cobBQ-type domain. Cys-334 serves as the catalytic Nucleophile. The active site involves His-421.

It belongs to the CobB/CobQ family. CobQ subfamily.

Its pathway is cofactor biosynthesis; adenosylcobalamin biosynthesis. In terms of biological role, catalyzes amidations at positions B, D, E, and G on adenosylcobyrinic A,C-diamide. NH(2) groups are provided by glutamine, and one molecule of ATP is hydrogenolyzed for each amidation. This chain is Cobyric acid synthase, found in Mycolicibacterium gilvum (strain PYR-GCK) (Mycobacterium gilvum (strain PYR-GCK)).